The following is a 211-amino-acid chain: LexA repressor (211 aa).

The segment at residues 35 to 55 (RAEIANFFGFKSANAAEEHLK) is a DNA-binding region (H-T-H motif). Catalysis depends on for autocatalytic cleavage activity residues S128 and K165.

The protein belongs to the peptidase S24 family. Homodimer.

It catalyses the reaction Hydrolysis of Ala-|-Gly bond in repressor LexA.. Functionally, represses a number of genes involved in the response to DNA damage (SOS response), including recA and lexA. In the presence of single-stranded DNA, RecA interacts with LexA causing an autocatalytic cleavage which disrupts the DNA-binding part of LexA, leading to derepression of the SOS regulon and eventually DNA repair. The sequence is that of LexA repressor from Colwellia psychrerythraea (strain 34H / ATCC BAA-681) (Vibrio psychroerythus).